The primary structure comprises 613 residues: Myosin light chain kinase 2, skeletal/cardiac muscle (613 aa).

Residues 1–20 (MTTENGAVELGSQSLSTEQT) show a composition bias toward polar residues. The segment at 1–168 (MTTENGAVEL…RGSPAFLHSP (168 aa)) is disordered. Basic and acidic residues predominate over residues 32 to 55 (SEKEPSAPATEKDLSPPNAKKDPG). Positions 56-66 (APDPKNNPDPP) are enriched in pro residues. Over residues 67-83 (SLKKDPAKAPGPEKKGD) the composition is skewed to basic and acidic residues. Residues 95–105 (SGEGDGGGGPA) are compositionally biased toward gly residues. The segment covering 106–122 (EGSEGPPAALPLPTATA) has biased composition (low complexity). The segment covering 145–158 (KAGKKAAECREAGR) has biased composition (basic and acidic residues). Residues Ser161, Ser167, and Ser169 each carry the phosphoserine modification. A disordered region spans residues 219-240 (EKKKEEAEKASGQAGQAKVQGD). Residues 302–557 (MNSKEALGGG…AEQCLAHPWL (256 aa)) form the Protein kinase domain. ATP contacts are provided by residues 308–316 (LGGGKFGAV) and Lys331. The Proton acceptor role is filled by Asp423. Thr462 is modified (phosphothreonine). The segment at 591–603 (IAVSAANRFKKIS) is calmodulin-binding.

This sequence belongs to the protein kinase superfamily. CAMK Ser/Thr protein kinase family. As to quaternary structure, may interact with centrin.

The protein resides in the cytoplasm. It carries out the reaction L-seryl-[myosin light chain] + ATP = O-phospho-L-seryl-[myosin light chain] + ADP + H(+). The catalysed reaction is L-threonyl-[myosin light chain] + ATP = O-phospho-L-threonyl-[myosin light chain] + ADP + H(+). Functionally, implicated in the level of global muscle contraction and cardiac function. Phosphorylates a specific serine in the N-terminus of a myosin light chain. The protein is Myosin light chain kinase 2, skeletal/cardiac muscle (Mylk2) of Mus musculus (Mouse).